The sequence spans 312 residues: tRNA-cytidine(32) 2-sulfurtransferase (312 aa).

Positions 39-44 (SGGKDS) match the PP-loop motif motif. [4Fe-4S] cluster contacts are provided by Cys114, Cys117, and Cys205.

It belongs to the TtcA family. Homodimer. Mg(2+) serves as cofactor. [4Fe-4S] cluster is required as a cofactor.

It localises to the cytoplasm. The catalysed reaction is cytidine(32) in tRNA + S-sulfanyl-L-cysteinyl-[cysteine desulfurase] + AH2 + ATP = 2-thiocytidine(32) in tRNA + L-cysteinyl-[cysteine desulfurase] + A + AMP + diphosphate + H(+). It participates in tRNA modification. Catalyzes the ATP-dependent 2-thiolation of cytidine in position 32 of tRNA, to form 2-thiocytidine (s(2)C32). The sulfur atoms are provided by the cysteine/cysteine desulfurase (IscS) system. The sequence is that of tRNA-cytidine(32) 2-sulfurtransferase from Cupriavidus pinatubonensis (strain JMP 134 / LMG 1197) (Cupriavidus necator (strain JMP 134)).